Reading from the N-terminus, the 762-residue chain is Endonuclease MutS2 (762 aa).

Positions Met-1–Pro-22 are disordered. Residues Leu-9–Thr-20 are compositionally biased toward low complexity. An ATP-binding site is contributed by Gly-333–Thr-340. Positions Leu-688–Leu-762 constitute a Smr domain.

The protein belongs to the DNA mismatch repair MutS family. MutS2 subfamily. In terms of assembly, homodimer. Binds to stalled ribosomes, contacting rRNA.

With respect to regulation, ATPase activity is stimulated by DNA. Endonuclease that is involved in the suppression of homologous recombination and may thus have a key role in the control of bacterial genetic diversity. Also involved in repairing oxidative DNA damage. Has ATPase activity. Binds DNA. Functionally, endonuclease that is involved in the suppression of homologous recombination and thus may have a key role in the control of bacterial genetic diversity. In terms of biological role, acts as a ribosome collision sensor, splitting the ribosome into its 2 subunits. Detects stalled/collided 70S ribosomes which it binds and splits by an ATP-hydrolysis driven conformational change. Acts upstream of the ribosome quality control system (RQC), a ribosome-associated complex that mediates the extraction of incompletely synthesized nascent chains from stalled ribosomes and their subsequent degradation. Probably generates substrates for RQC. The polypeptide is Endonuclease MutS2 (Helicobacter pylori (strain ATCC 700392 / 26695) (Campylobacter pylori)).